The primary structure comprises 536 residues: Pre-mRNA-splicing factor SLU7-B (536 aa).

The segment at M1 to P42 is disordered. Positions K9–K25 are enriched in basic and acidic residues. A CCHC-type zinc finger spans residues C96–C109. 2 disordered regions span residues L176–D201 and K488–N507. Positions N187–D200 are enriched in acidic residues. Residue S193 is modified to Phosphoserine. The short motif at L486 to R493 is the Nuclear localization signal element. Positions K488 to K501 are enriched in basic and acidic residues.

Belongs to the SLU7 family. As to quaternary structure, interacts with PHYB in photobodies under red light.

Its subcellular location is the nucleus. Functionally, participates in the second catalytic step of pre-mRNA splicing, when the free hydroxyl group of exon I attacks the 3'-splice site to generate spliced mRNA and the excised lariat intron. Splicing factor acting as a negative regulator of seedling photomorphogenesis by antagonizing PHYB signaling to promote light-induced hypocotyl elongation. Prevents the accumulation of functionally spliced RVE8a form, a circadian clock regulator mediating the transcriptional activation of clock genes containing evening elements (EE), but promotes PIF4 expression to fine-tune hypocotyl elongation in the light. Together with SMP1, involved in the timing of cell cycle arrest during leaf development, in a STRUWWELPETER (SWP) dependent manner; promotes cell proliferation in developing organs. This is Pre-mRNA-splicing factor SLU7-B from Arabidopsis thaliana (Mouse-ear cress).